The following is a 291-amino-acid chain: ATP synthase gamma chain (291 aa).

Belongs to the ATPase gamma chain family. As to quaternary structure, F-type ATPases have 2 components, CF(1) - the catalytic core - and CF(0) - the membrane proton channel. CF(1) has five subunits: alpha(3), beta(3), gamma(1), delta(1), epsilon(1). CF(0) has three main subunits: a, b and c.

Its subcellular location is the cell membrane. Functionally, produces ATP from ADP in the presence of a proton gradient across the membrane. The gamma chain is believed to be important in regulating ATPase activity and the flow of protons through the CF(0) complex. This is ATP synthase gamma chain from Streptococcus pyogenes serotype M49 (strain NZ131).